The primary structure comprises 361 residues: uncharacterized protein (361 aa).

A signal peptide spans 1 to 28 (MSKSKFTKIIVVICIAAMFITGTSILSF).

This is an uncharacterized protein from Ruminiclostridium cellulolyticum (strain ATCC 35319 / DSM 5812 / JCM 6584 / H10) (Clostridium cellulolyticum).